Here is a 198-residue protein sequence, read N- to C-terminus: MMEFIYPHTHLVAGVDEVGRGPLVGAVVTAAVILDPLKPIVGLADSKKLSEKRRLALFDEIKEKAIAWSLGRAEPHEIDELNILHATMLAMQRAVAGLAVTPEYVLVDGNRCPALPMPSMAVVKGDSRVAEISAASILAKVTRDAEMAELDLTFPQYGFAQHKGYPTAFHLERLAEHGATAHHRRSFAPVRRALGIAS.

The RNase H type-2 domain maps to 10 to 198 (HLVAGVDEVG…PVRRALGIAS (189 aa)). Residues D16, E17, and D108 each coordinate a divalent metal cation.

The protein belongs to the RNase HII family. Mn(2+) is required as a cofactor. Requires Mg(2+) as cofactor.

Its subcellular location is the cytoplasm. It carries out the reaction Endonucleolytic cleavage to 5'-phosphomonoester.. Its function is as follows. Endonuclease that specifically degrades the RNA of RNA-DNA hybrids. In Cronobacter sakazakii (strain ATCC BAA-894) (Enterobacter sakazakii), this protein is Ribonuclease HII.